The chain runs to 200 residues: ATP synthase subunit s, mitochondrial (200 aa).

Residues 1–25 (MMLFGKVSQQLCGIKKLPWSCDSRY) constitute a mitochondrion transit peptide. The tract at residues 1-61 (MMLFGKVSQQ…SEWLLRCGAM (61 aa)) is N-terminal domain. G59 provides a ligand contact to Mg(2+). LRR repeat units follow at residues 62–87 (VRYH…KYKI), 88–116 (QAID…KIRL), 117–141 (CKCH…KSIL), and 142–173 (EMEI…LSDL). Position 93 (T93) interacts with Mg(2+).

Belongs to the ATP synthase subunit s family. Homotetramer. Associates with ATP synthase.

The protein localises to the mitochondrion. The protein resides in the mitochondrion inner membrane. Involved in regulation of mitochondrial membrane ATP synthase. Necessary for H(+) conduction of ATP synthase. Facilitates energy-driven catalysis of ATP synthesis by blocking a proton leak through an alternative proton exit pathway. The polypeptide is ATP synthase subunit s, mitochondrial (DMAC2L) (Macaca fascicularis (Crab-eating macaque)).